The following is a 427-amino-acid chain: Enolase (427 aa).

Gln-163 lines the (2R)-2-phosphoglycerate pocket. Glu-205 acts as the Proton donor in catalysis. Mg(2+) is bound by residues Asp-242, Glu-285, and Asp-312. The (2R)-2-phosphoglycerate site is built by Lys-337, Arg-366, Ser-367, and Lys-388. The active-site Proton acceptor is Lys-337.

Belongs to the enolase family. It depends on Mg(2+) as a cofactor.

The protein localises to the cytoplasm. The protein resides in the secreted. It is found in the cell surface. It catalyses the reaction (2R)-2-phosphoglycerate = phosphoenolpyruvate + H2O. It functions in the pathway carbohydrate degradation; glycolysis; pyruvate from D-glyceraldehyde 3-phosphate: step 4/5. In terms of biological role, catalyzes the reversible conversion of 2-phosphoglycerate (2-PG) into phosphoenolpyruvate (PEP). It is essential for the degradation of carbohydrates via glycolysis. This chain is Enolase, found in Burkholderia ambifaria (strain MC40-6).